A 238-amino-acid polypeptide reads, in one-letter code: Ankyrin repeat domain-containing protein 49 (238 aa).

The interval 38–57 (TGTQSLWVGNSDEDEEQEEK) is disordered. S48 bears the Phosphoserine mark. Residues 48–57 (SDEDEEQEEK) are compositionally biased toward acidic residues. ANK repeat units lie at residues 72–105 (DPSK…TRDE), 106–135 (DEYT…DVHA), 139–168 (DGWT…DINA), and 172–205 (GLLT…ELKN).

As to expression, expressed in spermatogonia, spermatocytes and round spermatids.

The protein localises to the nucleus. Its function is as follows. May have a role in spermatogenesis where it promotes autophagy in response to serum starvation, via the NF-kappaB pathway. In Mus musculus (Mouse), this protein is Ankyrin repeat domain-containing protein 49 (Ankrd49).